The sequence spans 382 residues: Transforming growth factor beta-1 proprotein (382 aa).

The signal sequence occupies residues 1–20 (MRAVCLMLTALLMLEYVCRS). Residues 23 to 68 (MSTCKSLDLELVKRKRIEAIRGQILSKLRLPKEPEIDQEGDTEEVP) are straightjacket domain. Residues 69–264 (ASLMSIYNST…SLPVERHSQL (196 aa)) form an arm domain region. Residues Asn76, Asn116, and Asn125 are each glycosylated (N-linked (GlcNAc...) asparagine). Residues 218–243 (GKPMEEFRFKISGMNKLRGNTETLAM) are bowtie tail. The Cell attachment site signature appears at 235-237 (RGN). Intrachain disulfides connect Cys278–Cys286, Cys285–Cys348, Cys314–Cys379, and Cys318–Cys381.

Belongs to the TGF-beta family. Latency-associated peptide: Homodimer; disulfide-linked. Latency-associated peptide: Interacts with Transforming growth factor beta-1 (TGF-beta-1) chain; interaction is non-covalent and maintains (TGF-beta-1) in a latent state; each Latency-associated peptide (LAP) monomer interacts with TGF-beta-1 in the other monomer. Transforming growth factor beta-1: Homodimer; disulfide-linked. Transforming growth factor beta-1: Interacts with TGF-beta receptors (tgfbr1 and tgfbr2), leading to signal transduction. Interacts with EFEMP2. Post-translationally, transforming growth factor beta-1 proprotein: The precursor proprotein is cleaved in the Golgi apparatus to form Transforming growth factor beta-1 (TGF-beta-1) and Latency-associated peptide (LAP) chains, which remain non-covalently linked, rendering TGF-beta-1 inactive. As to expression, expressed in blood leukocytes, kidney macrophages, brain, gill and spleen but not in liver.

Its subcellular location is the secreted. It is found in the extracellular space. It localises to the extracellular matrix. Functionally, transforming growth factor beta-1 proprotein: Precursor of the Latency-associated peptide (LAP) and Transforming growth factor beta-1 (TGF-beta-1) chains, which constitute the regulatory and active subunit of TGF-beta-1, respectively. Its function is as follows. Required to maintain the Transforming growth factor beta-1 (TGF-beta-1) chain in a latent state during storage in extracellular matrix. Associates non-covalently with TGF-beta-1 and regulates its activation via interaction with 'milieu molecules', such as LTBP1, LRRC32/GARP and LRRC33/NRROS, that control activation of TGF-beta-1. Interaction with integrins (ITGAV:ITGB6 or ITGAV:ITGB8) results in distortion of the Latency-associated peptide chain and subsequent release of the active TGF-beta-1. In terms of biological role, transforming growth factor beta-1: Multifunctional protein that regulates the growth and differentiation of various cell types and is involved in various processes, such as normal development, immune function, microglia function and responses to neurodegeneration. Activation into mature form follows different steps: following cleavage of the proprotein in the Golgi apparatus, Latency-associated peptide (LAP) and Transforming growth factor beta-1 (TGF-beta-1) chains remain non-covalently linked rendering TGF-beta-1 inactive during storage in extracellular matrix. At the same time, LAP chain interacts with 'milieu molecules', such as ltbp1, lrrc32/garp and lrrc33/nrros that control activation of TGF-beta-1 and maintain it in a latent state during storage in extracellular milieus. TGF-beta-1 is released from LAP by integrins (ITGAV:ITGB6 or ITGAV:ITGB8): integrin-binding to LAP stabilizes an alternative conformation of the LAP bowtie tail and results in distortion of the LAP chain and subsequent release of the active TGF-beta-1. Once activated following release of LAP, TGF-beta-1 acts by binding to TGF-beta receptors (tgfbr1 and tgfbr2), which transduce signal. While expressed by many cells types, TGF-beta-1 only has a very localized range of action within cell environment thanks to fine regulation of its activation by Latency-associated peptide chain (LAP) and 'milieu molecules'. Plays an important role in bone remodeling: acts as a potent stimulator of osteoblastic bone formation. Can promote either T-helper 17 cells (Th17) or regulatory T-cells (Treg) lineage differentiation in a concentration-dependent manner. Can induce epithelial-to-mesenchymal transition (EMT) and cell migration in various cell types. This chain is Transforming growth factor beta-1 proprotein (tgfb1), found in Oncorhynchus mykiss (Rainbow trout).